A 231-amino-acid chain; its full sequence is Protein OPG061 (231 aa).

The protein belongs to the orthopoxvirus OPG058 family.

The protein localises to the host nucleus. The protein resides in the host nucleolus. This Homo sapiens (Human) protein is Protein OPG061 (OPG061).